A 527-amino-acid polypeptide reads, in one-letter code: Probable malate:quinone oxidoreductase (527 aa).

This sequence belongs to the MQO family. It depends on FAD as a cofactor.

The catalysed reaction is (S)-malate + a quinone = a quinol + oxaloacetate. It functions in the pathway carbohydrate metabolism; tricarboxylic acid cycle; oxaloacetate from (S)-malate (quinone route): step 1/1. This Pectobacterium atrosepticum (strain SCRI 1043 / ATCC BAA-672) (Erwinia carotovora subsp. atroseptica) protein is Probable malate:quinone oxidoreductase.